The following is a 303-amino-acid chain: Aspartate carbamoyltransferase catalytic subunit (303 aa).

Residues Arg51 and Thr52 each coordinate carbamoyl phosphate. Residue Lys80 coordinates L-aspartate. Carbamoyl phosphate-binding residues include Arg101, His129, and Gln132. Residues Arg162 and Arg221 each coordinate L-aspartate. Carbamoyl phosphate-binding residues include Leu260 and Pro261.

This sequence belongs to the aspartate/ornithine carbamoyltransferase superfamily. ATCase family. In terms of assembly, heterooligomer of catalytic and regulatory chains.

It catalyses the reaction carbamoyl phosphate + L-aspartate = N-carbamoyl-L-aspartate + phosphate + H(+). It functions in the pathway pyrimidine metabolism; UMP biosynthesis via de novo pathway; (S)-dihydroorotate from bicarbonate: step 2/3. Catalyzes the condensation of carbamoyl phosphate and aspartate to form carbamoyl aspartate and inorganic phosphate, the committed step in the de novo pyrimidine nucleotide biosynthesis pathway. This chain is Aspartate carbamoyltransferase catalytic subunit, found in Saccharolobus islandicus (strain M.16.4 / Kamchatka #3) (Sulfolobus islandicus).